Here is a 357-residue protein sequence, read N- to C-terminus: Heat-inducible transcription repressor HrcA (357 aa).

Belongs to the HrcA family.

Its function is as follows. Negative regulator of class I heat shock genes (grpE-dnaK-dnaJ and groELS operons). Prevents heat-shock induction of these operons. This Chlorobium phaeobacteroides (strain DSM 266 / SMG 266 / 2430) protein is Heat-inducible transcription repressor HrcA.